The primary structure comprises 107 residues: Protein RnfH (107 aa).

Positions 82 to 107 (ARRKRAEKAKEEGRANKVTGGRPIER) are disordered.

It belongs to the UPF0125 (RnfH) family.

The chain is Protein RnfH from Pseudoalteromonas translucida (strain TAC 125).